Consider the following 244-residue polypeptide: Agamous-like MADS-box protein MADS3 (244 aa).

Residues 1–61 (MGRGRVELKR…GKLYEFGSAG (61 aa)) form the MADS-box domain. A K-box domain is found at 85–175 (TQSWYQEVSK…KLKLEAEGQS (91 aa)). The interval 180-206 (QGSWNPSTATAGNSSFPVHPSQSNPMD) is disordered. A compositionally biased stretch (polar residues) spans 181 to 204 (GSWNPSTATAGNSSFPVHPSQSNP).

In terms of tissue distribution, expressed in flowers and seeds.

The protein localises to the nucleus. In terms of biological role, probable transcription factor involved in flower development. In Vitis vinifera (Grape), this protein is Agamous-like MADS-box protein MADS3.